The sequence spans 385 residues: ATP phosphoribosyltransferase regulatory subunit (385 aa).

It belongs to the class-II aminoacyl-tRNA synthetase family. HisZ subfamily. Heteromultimer composed of HisG and HisZ subunits.

Its subcellular location is the cytoplasm. Its pathway is amino-acid biosynthesis; L-histidine biosynthesis; L-histidine from 5-phospho-alpha-D-ribose 1-diphosphate: step 1/9. In terms of biological role, required for the first step of histidine biosynthesis. May allow the feedback regulation of ATP phosphoribosyltransferase activity by histidine. The chain is ATP phosphoribosyltransferase regulatory subunit from Laribacter hongkongensis (strain HLHK9).